Consider the following 443-residue polypeptide: Glutamyl-tRNA reductase (443 aa).

Substrate-binding positions include 49–52 (TCNR), Ser109, 114–116 (ETQ), and Gln120. Residue Cys50 is the Nucleophile of the active site. NADP(+) is bound at residue 189-194 (GAGDMS).

This sequence belongs to the glutamyl-tRNA reductase family. As to quaternary structure, homodimer.

The catalysed reaction is (S)-4-amino-5-oxopentanoate + tRNA(Glu) + NADP(+) = L-glutamyl-tRNA(Glu) + NADPH + H(+). It participates in porphyrin-containing compound metabolism; protoporphyrin-IX biosynthesis; 5-aminolevulinate from L-glutamyl-tRNA(Glu): step 1/2. Its function is as follows. Catalyzes the NADPH-dependent reduction of glutamyl-tRNA(Glu) to glutamate 1-semialdehyde (GSA). This chain is Glutamyl-tRNA reductase, found in Staphylococcus saprophyticus subsp. saprophyticus (strain ATCC 15305 / DSM 20229 / NCIMB 8711 / NCTC 7292 / S-41).